The following is a 428-amino-acid chain: AP-1 complex subunit mu (428 aa).

N-acetylalanine; partial is present on A2. Positions K169–R426 constitute an MHD domain.

This sequence belongs to the adaptor complexes medium subunit family. As to quaternary structure, adaptor protein complex 1 (AP-1) is a heterotetramer composed of two large adaptins (gamma-type subunit and beta-type subunit), a medium adaptin (mu-type subunit) and a small adaptin (sigma-type subunit).

Its subcellular location is the golgi apparatus. It localises to the trans-Golgi network. The protein localises to the cytoplasmic vesicle. It is found in the clathrin-coated vesicle membrane. Functionally, subunit of clathrin-associated adaptor protein complex 1 that plays a role in protein sorting in the trans-Golgi network (TGN) and endosomes. The AP complexes mediate the recruitment of clathrin to membranes and the recognition of sorting signals within the cytosolic tails of transmembrane cargo molecules. Also involved in early steps of phagocytosis and macropinocytosis. The sequence is that of AP-1 complex subunit mu (apm1) from Dictyostelium discoideum (Social amoeba).